We begin with the raw amino-acid sequence, 181 residues long: Inner membrane-spanning protein YciB (181 aa).

5 helical membrane-spanning segments follow: residues 10–30, 50–70, 80–100, 118–138, and 148–168; these read LVIF…GALI, MHLI…VFHD, IIYS…KSIL, VTWY…YVAF, and FKVF…VFYL.

It belongs to the YciB family.

The protein localises to the cell inner membrane. Functionally, plays a role in cell envelope biogenesis, maintenance of cell envelope integrity and membrane homeostasis. This chain is Inner membrane-spanning protein YciB, found in Shewanella baltica (strain OS223).